A 938-amino-acid chain; its full sequence is Isoleucine--tRNA ligase (938 aa).

The 'HIGH' region motif lies at 58 to 68 (PYANGSIHIGH). Lys-183 carries the N6-acetyllysine modification. Glu-561 lines the L-isoleucyl-5'-AMP pocket. The 'KMSKS' region signature appears at 602 to 606 (KMSKS). Residue Lys-605 participates in ATP binding. Zn(2+) contacts are provided by Cys-901, Cys-904, Cys-921, and Cys-924.

Belongs to the class-I aminoacyl-tRNA synthetase family. IleS type 1 subfamily. As to quaternary structure, monomer. Requires Zn(2+) as cofactor.

The protein resides in the cytoplasm. The enzyme catalyses tRNA(Ile) + L-isoleucine + ATP = L-isoleucyl-tRNA(Ile) + AMP + diphosphate. Its function is as follows. Catalyzes the attachment of isoleucine to tRNA(Ile). As IleRS can inadvertently accommodate and process structurally similar amino acids such as valine, to avoid such errors it has two additional distinct tRNA(Ile)-dependent editing activities. One activity is designated as 'pretransfer' editing and involves the hydrolysis of activated Val-AMP. The other activity is designated 'posttransfer' editing and involves deacylation of mischarged Val-tRNA(Ile). The chain is Isoleucine--tRNA ligase from Escherichia coli O127:H6 (strain E2348/69 / EPEC).